The primary structure comprises 542 residues: Chaperonin GroEL 2 (542 aa).

ATP-binding positions include 30-33 (TLGP), K51, 87-91 (DGTTT), G415, and D496.

It belongs to the chaperonin (HSP60) family. Forms a cylinder of 14 subunits composed of two heptameric rings stacked back-to-back. Interacts with the co-chaperonin GroES.

Its subcellular location is the cytoplasm. The catalysed reaction is ATP + H2O + a folded polypeptide = ADP + phosphate + an unfolded polypeptide.. Its function is as follows. Together with its co-chaperonin GroES, plays an essential role in assisting protein folding. The GroEL-GroES system forms a nano-cage that allows encapsulation of the non-native substrate proteins and provides a physical environment optimized to promote and accelerate protein folding. This Rhizobium meliloti (strain 1021) (Ensifer meliloti) protein is Chaperonin GroEL 2.